The sequence spans 82 residues: MSSINYPFVTEKAMMLLDENKLQFIVDTRSNKKQILEDVEKMYGFKVKSVRTMTTMKGMKKAVLAFEEPEAAHEIATRIGLM.

It belongs to the universal ribosomal protein uL23 family. As to quaternary structure, part of the 50S ribosomal subunit. Contacts protein L29.

In terms of biological role, binds to 23S rRNA. One of the proteins that surrounds the polypeptide exit tunnel on the outside of the ribosome. This is Large ribosomal subunit protein uL23 from Methanosarcina acetivorans (strain ATCC 35395 / DSM 2834 / JCM 12185 / C2A).